The following is a 566-amino-acid chain: Putative ABC transporter ATP-binding protein lp_0149 (566 aa).

ABC transporter domains lie at 6-247 (ISFK…GLRE) and 302-536 (LAIE…ASLA). ATP contacts are provided by residues 40–47 (GPSGSGKS) and 335–342 (GQNGTGKS).

Belongs to the ABC transporter superfamily.

It localises to the cell membrane. Probably part of an ABC transporter complex. Responsible for energy coupling to the transport system. The protein is Putative ABC transporter ATP-binding protein lp_0149 of Lactiplantibacillus plantarum (strain ATCC BAA-793 / NCIMB 8826 / WCFS1) (Lactobacillus plantarum).